The primary structure comprises 393 residues: Dual-specificity RNA methyltransferase RlmN (393 aa).

Glutamate 114 acts as the Proton acceptor in catalysis. One can recognise a Radical SAM core domain in the interval 120–359 (EDDRATLCVS…VIVRKTRGDD (240 aa)). A disulfide bond links cysteine 127 and cysteine 364. Positions 134, 138, and 141 each coordinate [4Fe-4S] cluster. Residues 188 to 189 (GE), serine 220, 242 to 244 (SLH), and asparagine 321 contribute to the S-adenosyl-L-methionine site. Cysteine 364 (S-methylcysteine intermediate) is an active-site residue.

The protein belongs to the radical SAM superfamily. RlmN family. The cofactor is [4Fe-4S] cluster.

It is found in the cytoplasm. It catalyses the reaction adenosine(2503) in 23S rRNA + 2 reduced [2Fe-2S]-[ferredoxin] + 2 S-adenosyl-L-methionine = 2-methyladenosine(2503) in 23S rRNA + 5'-deoxyadenosine + L-methionine + 2 oxidized [2Fe-2S]-[ferredoxin] + S-adenosyl-L-homocysteine. The enzyme catalyses adenosine(37) in tRNA + 2 reduced [2Fe-2S]-[ferredoxin] + 2 S-adenosyl-L-methionine = 2-methyladenosine(37) in tRNA + 5'-deoxyadenosine + L-methionine + 2 oxidized [2Fe-2S]-[ferredoxin] + S-adenosyl-L-homocysteine. In terms of biological role, specifically methylates position 2 of adenine 2503 in 23S rRNA and position 2 of adenine 37 in tRNAs. m2A2503 modification seems to play a crucial role in the proofreading step occurring at the peptidyl transferase center and thus would serve to optimize ribosomal fidelity. The polypeptide is Dual-specificity RNA methyltransferase RlmN (Actinobacillus pleuropneumoniae serotype 3 (strain JL03)).